Consider the following 457-residue polypeptide: MPDLPSAFLPLLLLSKFVTPVTFRHHRYDDLVRTLYKVHNQCPDITRLYNIGRSVKGRYLYVLEFSDYPGIHEPLEPEVKYVGNMHGNEVLGRELLLQLSEFLCEEFRNRNQRILRLIQDTRIHILPSMNPDGYEVAAAQGPNMSGYLVGRNNANGVDLNRNFPDLNTYFYYNSKNGGPNHHLPLPDNWKSQVEPETRAVIQWIRSLNFVLSANMHGGAVVANYPYDKSLEHRFRGPHRTSNSPTPDDELFQTLAKVYSYAHGWMHQGWNCGDYFPDGITNGASWYSLSKGMQDFNYLHTNCFEITLELSCDKFPRQEELQREWLGNREALIQFLEQVHQGIKGMVLDENSNNLTGAVISVTGINHDVTSGEHGDYFRLLLPGTYSVTAKAPGYDPKTVTVTVGPAGPTVVDFQLKRSSSQVYPVQRAPGRGQGGRAKQPRTSRKKDPATKRHRGPA.

Positions 1–23 (MPDLPSAFLPLLLLSKFVTPVTF) are cleaved as a signal peptide. Positions 24–338 (RHHRYDDLVR…EALIQFLEQV (315 aa)) constitute a Peptidase M14 domain. Cysteine 42 and cysteine 104 are joined by a disulfide. The Zn(2+) site is built by histidine 86, glutamate 89, and histidine 216. A disulfide bridge links cysteine 271 with cysteine 311. Glutamate 308 serves as the catalytic Proton donor/acceptor. Threonine 400, threonine 402, and threonine 409 each carry an O-linked (GalNAc...) threonine glycan. The disordered stretch occupies residues 418 to 457 (SSSQVYPVQRAPGRGQGGRAKQPRTSRKKDPATKRHRGPA).

Belongs to the peptidase M14 family. In terms of assembly, tetramer of two catalytic chains and two glycosylated inactive chains. Zn(2+) serves as cofactor. As to expression, mainly expressed in liver. Also detected in lung, stomach, intestine, spleen and kidney.

It is found in the secreted. Its subcellular location is the extracellular space. The enzyme catalyses Release of a C-terminal basic amino acid, preferentially lysine.. Its function is as follows. Protects the body from potent vasoactive and inflammatory peptides containing C-terminal Arg or Lys (such as kinins or anaphylatoxins) which are released into the circulation. The polypeptide is Carboxypeptidase N catalytic chain (Cpn1) (Mus musculus (Mouse)).